A 474-amino-acid chain; its full sequence is Nuclear receptor ROR-alpha B (474 aa).

The segment at residues 14–89 is a DNA-binding region (nuclear receptor); it reads SIPCKICGDK…VGMSRDAVKF (76 aa). 2 consecutive NR C4-type zinc fingers follow at residues 17-37 and 53-72; these read CKICGDKSSGIHYGVITCEGC and CPRQKSCLIDRTSRNRCQHC. The segment covering 98–124 has biased composition (basic and acidic residues); sequence DSLFAEVQKHRQQQQDDKTGDESEKNQ. The interval 98–144 is disordered; it reads DSLFAEVQKHRQQQQDDKTGDESEKNQESQAPGEAEPLTPSYALSSS. In terms of domain architecture, NR LBD spans 223–461; the sequence is DLEHLSENIC…TRFPPLYKEL (239 aa). The segment at 450 to 461 is AF-2; the sequence is VHTRFPPLYKEL.

Belongs to the nuclear hormone receptor family.

It is found in the nucleus. Functionally, nuclear receptor that binds DNA as a monomer to ROR response elements (RORE). Required for proper cerebellum development. This chain is Nuclear receptor ROR-alpha B (rorab), found in Danio rerio (Zebrafish).